The primary structure comprises 74 residues: Exodeoxyribonuclease 7 small subunit (74 aa).

Belongs to the XseB family. In terms of assembly, heterooligomer composed of large and small subunits.

The protein resides in the cytoplasm. It carries out the reaction Exonucleolytic cleavage in either 5'- to 3'- or 3'- to 5'-direction to yield nucleoside 5'-phosphates.. Bidirectionally degrades single-stranded DNA into large acid-insoluble oligonucleotides, which are then degraded further into small acid-soluble oligonucleotides. The protein is Exodeoxyribonuclease 7 small subunit of Haemophilus ducreyi (strain 35000HP / ATCC 700724).